The following is a 171-amino-acid chain: Putative phosphoesterase BPUM_1117 (171 aa).

Catalysis depends on H34, which acts as the Proton donor. 2 short sequence motifs (HXTX) span residues H34 to L37 and H115 to V118. The Proton acceptor role is filled by H115.

Belongs to the 2H phosphoesterase superfamily. YjcG family.

The protein is Putative phosphoesterase BPUM_1117 of Bacillus pumilus (strain SAFR-032).